Consider the following 412-residue polypeptide: Protein png-1 (412 aa).

Residues C150, C153, C182, and C185 each contribute to the Zn(2+) site. Positions 363–412 are disordered; it reads AAAARGGRSSPDNKSGANMMGSPATGDIKRPIPEDAPVPDVPSLWPTYGP.

The protein belongs to the transglutaminase-like superfamily. PNGase family.

This is Protein png-1 (un-7) from Neurospora crassa (strain ATCC 24698 / 74-OR23-1A / CBS 708.71 / DSM 1257 / FGSC 987).